The sequence spans 294 residues: 4-hydroxy-tetrahydrodipicolinate synthase (294 aa).

Residue T47 participates in pyruvate binding. Catalysis depends on Y135, which acts as the Proton donor/acceptor. Catalysis depends on K164, which acts as the Schiff-base intermediate with substrate. Residue V206 participates in pyruvate binding.

Belongs to the DapA family. As to quaternary structure, homotetramer; dimer of dimers.

The protein resides in the cytoplasm. The enzyme catalyses L-aspartate 4-semialdehyde + pyruvate = (2S,4S)-4-hydroxy-2,3,4,5-tetrahydrodipicolinate + H2O + H(+). It participates in amino-acid biosynthesis; L-lysine biosynthesis via DAP pathway; (S)-tetrahydrodipicolinate from L-aspartate: step 3/4. Catalyzes the condensation of (S)-aspartate-beta-semialdehyde [(S)-ASA] and pyruvate to 4-hydroxy-tetrahydrodipicolinate (HTPA). The sequence is that of 4-hydroxy-tetrahydrodipicolinate synthase from Lachnoclostridium phytofermentans (strain ATCC 700394 / DSM 18823 / ISDg) (Clostridium phytofermentans).